Here is a 217-residue protein sequence, read N- to C-terminus: Adenylate kinase (217 aa).

ATP is bound at residue 10–15 (GAGKGT). Residues 30–59 (STGDMLRAAVKAESELGLQVKEVMASGGLV) form an NMP region. Residues Thr-31, Arg-36, 57-59 (GLV), 85-88 (GFPR), and Gln-92 contribute to the AMP site. Residues 122 to 159 (GRRVHEGSGRIYHVKYDPPKVEGKDDETGEALIQREDD) are LID. Residues Arg-123 and 132 to 133 (IY) contribute to the ATP site. AMP contacts are provided by Arg-156 and Arg-167. Gly-203 provides a ligand contact to ATP.

Belongs to the adenylate kinase family. Monomer.

It localises to the cytoplasm. The enzyme catalyses AMP + ATP = 2 ADP. It participates in purine metabolism; AMP biosynthesis via salvage pathway; AMP from ADP: step 1/1. Its function is as follows. Catalyzes the reversible transfer of the terminal phosphate group between ATP and AMP. Plays an important role in cellular energy homeostasis and in adenine nucleotide metabolism. This is Adenylate kinase from Marinobacter nauticus (strain ATCC 700491 / DSM 11845 / VT8) (Marinobacter aquaeolei).